The following is a 333-amino-acid chain: tRNA uridine(34) hydroxylase (333 aa).

The region spanning 123-217 is the Rhodanese domain; sequence SDPEVVLVDT…YLEEVNKAES (95 aa). Cys-177 (cysteine persulfide intermediate) is an active-site residue. The segment covering 313-327 has biased composition (basic and acidic residues); the sequence is QKKEALRKQSAEKNK. Residues 313-333 are disordered; that stretch reads QKKEALRKQSAEKNKAKQANA.

It belongs to the TrhO family.

It carries out the reaction uridine(34) in tRNA + AH2 + O2 = 5-hydroxyuridine(34) in tRNA + A + H2O. Functionally, catalyzes oxygen-dependent 5-hydroxyuridine (ho5U) modification at position 34 in tRNAs. The chain is tRNA uridine(34) hydroxylase from Shewanella oneidensis (strain ATCC 700550 / JCM 31522 / CIP 106686 / LMG 19005 / NCIMB 14063 / MR-1).